The following is a 376-amino-acid chain: MLDLIQTRRDLHQIPEIGLEEFKTQAYLLDVIEKLTTGKDFVQIRTWRTGILVYLQGSQPERTIGWRTDIDGLPIVEQTGLPFASQHQGRMHACGHDFHMTIALGCLERALEEQPKNNLLFLFQPAEENEAGGMLMYEAGAFGDWLPDQFYGLHVRPDLKVGQIATNTHTLFAGTCEVKIRFKGKGGHAAFPHEANDALVAASYFVTQVQSVVSRNVNPIEGAVVTFGVFQAGTTNNVITDTAFLHGTIRALTQDMSLLVQKRVKTVAEGIAAAFDMEVEVELKQGGYLPVENNPALARELMDFFDEKDGIELIDIEPAMTGEDFGYLLSKVDGVMFWLGIDSPYALHHPQMSPKEEVLAIGVAAVSSFLKKKAAE.

Asp-69 is a catalytic residue. The active-site Proton acceptor is the Glu-128.

Belongs to the peptidase M20A family. N-acetyldiaminopimelate deacetylase subfamily.

The enzyme catalyses N-acetyl-(2S,6S)-2,6-diaminopimelate + H2O = (2S,6S)-2,6-diaminopimelate + acetate. It functions in the pathway amino-acid biosynthesis; L-lysine biosynthesis via DAP pathway; LL-2,6-diaminopimelate from (S)-tetrahydrodipicolinate (acetylase route): step 3/3. Catalyzes the conversion of N-acetyl-diaminopimelate to diaminopimelate and acetate. This Streptococcus pneumoniae (strain Taiwan19F-14) protein is N-acetyldiaminopimelate deacetylase.